Reading from the N-terminus, the 119-residue chain is Ribosome-binding factor A (119 aa).

This sequence belongs to the RbfA family. Monomer. Binds 30S ribosomal subunits, but not 50S ribosomal subunits or 70S ribosomes.

It is found in the cytoplasm. Its function is as follows. One of several proteins that assist in the late maturation steps of the functional core of the 30S ribosomal subunit. Associates with free 30S ribosomal subunits (but not with 30S subunits that are part of 70S ribosomes or polysomes). Required for efficient processing of 16S rRNA. May interact with the 5'-terminal helix region of 16S rRNA. This is Ribosome-binding factor A from Citrifermentans bemidjiense (strain ATCC BAA-1014 / DSM 16622 / JCM 12645 / Bem) (Geobacter bemidjiensis).